A 218-amino-acid chain; its full sequence is Ribose-5-phosphate isomerase A (218 aa).

Substrate-binding positions include 28-31 (TGST), 81-84 (DGAD), and 94-97 (KGGG). The active-site Proton acceptor is glutamate 103. Lysine 121 provides a ligand contact to substrate.

Belongs to the ribose 5-phosphate isomerase family. As to quaternary structure, homodimer.

It catalyses the reaction aldehydo-D-ribose 5-phosphate = D-ribulose 5-phosphate. It participates in carbohydrate degradation; pentose phosphate pathway; D-ribose 5-phosphate from D-ribulose 5-phosphate (non-oxidative stage): step 1/1. Functionally, catalyzes the reversible conversion of ribose-5-phosphate to ribulose 5-phosphate. In Vibrio parahaemolyticus serotype O3:K6 (strain RIMD 2210633), this protein is Ribose-5-phosphate isomerase A.